The following is a 209-amino-acid chain: Cytochrome bo(3) ubiquinol oxidase subunit 3 (209 aa).

Topologically, residues 1-29 (MSTAVLNKHLADAHEVGHDHDHAHDSGGN) are cytoplasmic. A helical transmembrane segment spans residues 30–50 (TVFGFWLYLMTDCVLFASVFA). Residues 51 to 72 (TYAVLVHHTAGGPSGKDIFELP) lie on the Periplasmic side of the membrane. Residues 73 to 93 (YVLVETAILLVSSCTYGLAML) traverse the membrane as a helical segment. Over 94 to 102 (SAHKGAKGQ) the chain is Cytoplasmic. Residues 103–123 (AIAWLGVTFLLGAAFIGMEIN) traverse the membrane as a helical segment. Residues 124-143 (EFHHLIAEGFGPSRSAFLSS) are Periplasmic-facing. The chain crosses the membrane as a helical span at residues 144–164 (FFTLVGMHGLHVSAGLLWMLV). The Cytoplasmic segment spans residues 165-186 (LMAQIWTRGLTAQNNTRMMCLS). A helical membrane pass occupies residues 187-207 (LFWHFLDIVWICVFTVVYLMG). Residues 208–209 (AL) lie on the Periplasmic side of the membrane.

Belongs to the cytochrome c oxidase subunit 3 family. Heterooctamer of two A chains, two B chains, two C chains and two D chains.

The protein resides in the cell inner membrane. In terms of biological role, cytochrome bo(3) ubiquinol terminal oxidase is the component of the aerobic respiratory chain of E.coli that predominates when cells are grown at high aeration. Has proton pump activity across the membrane in addition to electron transfer, pumping 2 protons/electron. The sequence is that of Cytochrome bo(3) ubiquinol oxidase subunit 3 (cyoC) from Pseudomonas aeruginosa (strain ATCC 15692 / DSM 22644 / CIP 104116 / JCM 14847 / LMG 12228 / 1C / PRS 101 / PAO1).